A 347-amino-acid chain; its full sequence is MIKLFSLFIYLYLISNLKLINTINNTPVIGILTQPFPSSINIKYGDNYLMASYVKYVESAGARVVPIFYNQDDESLTTIFKQINGILLPGGDVDFKTEIQYVKTLTLIWDYVLDVNINGDYFPLWGTCLGLEEIVSLQAESFDVLTDFNAENYSIPLNFSNIALESKIMKNCPTNIINSLANDPITMNNHHFGISPNTFDNNSLLNQFFNVLATNNDKSGNEFISLIESKDYPIYAIIWHPEKSPYSWYSKDATDHSFNAILACQYMSNFFVNETRKSNHKFNDEEVLFKSLIYNYNPTYTFKETHVEQIYIFNTSTNNTKNDFNINQIFSKKLFIIIFILIILFFK.

An N-terminal signal peptide occupies residues 1-22 (MIKLFSLFIYLYLISNLKLINT). The 292-residue stretch at 23-314 (INNTPVIGIL…THVEQIYIFN (292 aa)) folds into the Gamma-glutamyl hydrolase domain. The active-site Nucleophile is the cysteine 128. Residues asparagine 152, asparagine 158, and asparagine 201 are each glycosylated (N-linked (GlcNAc...) asparagine). The Proton donor role is filled by histidine 240. N-linked (GlcNAc...) asparagine glycosylation is found at asparagine 273, asparagine 314, and asparagine 318.

The protein belongs to the peptidase C26 family.

The protein localises to the secreted. It is found in the extracellular space. The catalysed reaction is (6S)-5,6,7,8-tetrahydrofolyl-(gamma-L-Glu)(n) + (n-1) H2O = (6S)-5,6,7,8-tetrahydrofolate + (n-1) L-glutamate. This Dictyostelium discoideum (Social amoeba) protein is Gamma-glutamyl hydrolase B (gghB).